Here is a 180-residue protein sequence, read N- to C-terminus: GTP cyclohydrolase 1 (180 aa).

Residues Cys71, His74, and Cys142 each coordinate Zn(2+).

Belongs to the GTP cyclohydrolase I family. As to quaternary structure, toroid-shaped homodecamer, composed of two pentamers of five dimers.

It catalyses the reaction GTP + H2O = 7,8-dihydroneopterin 3'-triphosphate + formate + H(+). It functions in the pathway cofactor biosynthesis; 7,8-dihydroneopterin triphosphate biosynthesis; 7,8-dihydroneopterin triphosphate from GTP: step 1/1. The chain is GTP cyclohydrolase 1 from Helicobacter acinonychis (strain Sheeba).